Reading from the N-terminus, the 362-residue chain is Heme A synthase (362 aa).

A run of 5 helical transmembrane segments spans residues 15–35, 104–124, 129–149, 161–181, and 200–220; these read VRIWLTLVAMLIAVMVLVGGA, VIGIAYLLPLLWFLWRGAIAP, ALWAIFALGALQGAVGWWMVA, VRLAIHLTLALVIYAAIVWTL, and AIALLALTLVQLFLGALVAGL. A heme-binding site is contributed by H264. 3 consecutive transmembrane segments (helical) span residues 266–285, 293–313, and 316–336; these read MMAYALWALAAWHAIDALRA, GALWLFAALSLQAVLGILTLL, and VPIGLALAHQAVGIVVLTLAV. H324 provides a ligand contact to heme.

It belongs to the COX15/CtaA family. Type 2 subfamily. Interacts with CtaB. Heme b is required as a cofactor.

Its subcellular location is the cell membrane. The catalysed reaction is Fe(II)-heme o + 2 A + H2O = Fe(II)-heme a + 2 AH2. It participates in porphyrin-containing compound metabolism; heme A biosynthesis; heme A from heme O: step 1/1. Functionally, catalyzes the conversion of heme O to heme A by two successive hydroxylations of the methyl group at C8. The first hydroxylation forms heme I, the second hydroxylation results in an unstable dihydroxymethyl group, which spontaneously dehydrates, resulting in the formyl group of heme A. The chain is Heme A synthase from Rhodopseudomonas palustris (strain BisB5).